Consider the following 75-residue polypeptide: Sec-independent protein translocase protein TatA (75 aa).

A helical membrane pass occupies residues M1–G21. Residues D45–S75 are disordered.

This sequence belongs to the TatA/E family. The Tat system comprises two distinct complexes: a TatABC complex, containing multiple copies of TatA, TatB and TatC subunits, and a separate TatA complex, containing only TatA subunits. Substrates initially bind to the TatABC complex, which probably triggers association of the separate TatA complex to form the active translocon.

The protein localises to the cell inner membrane. Functionally, part of the twin-arginine translocation (Tat) system that transports large folded proteins containing a characteristic twin-arginine motif in their signal peptide across membranes. TatA could form the protein-conducting channel of the Tat system. The sequence is that of Sec-independent protein translocase protein TatA from Bordetella bronchiseptica (strain ATCC BAA-588 / NCTC 13252 / RB50) (Alcaligenes bronchisepticus).